A 2287-amino-acid polypeptide reads, in one-letter code: Protein Ycf2 (2287 aa).

1641-1648 (GSIGTGRS) is a binding site for ATP.

Belongs to the Ycf2 family.

The protein localises to the plastid. It is found in the chloroplast stroma. Functionally, probable ATPase of unknown function. Its presence in a non-photosynthetic plant (Epifagus virginiana) and experiments in tobacco indicate that it has an essential function which is probably not related to photosynthesis. This Lepidium virginicum (Virginia pepperweed) protein is Protein Ycf2.